The chain runs to 148 residues: Snaclec 7 (148 aa).

An N-terminal signal peptide occupies residues 1 to 23 (MGRFIFVSFGLLVVFLSLSGTGA). 3 disulfide bridges follow: cysteine 27–cysteine 38, cysteine 55–cysteine 144, and cysteine 121–cysteine 136. The 112-residue stretch at 34–145 (HERHCYKVIN…CSSTHPFVCK (112 aa)) folds into the C-type lectin domain.

Belongs to the snaclec family. In terms of assembly, heterodimer; disulfide-linked. As to expression, expressed by the venom gland.

Its subcellular location is the secreted. Its function is as follows. Interferes with one step of hemostasis (modulation of platelet aggregation, or coagulation cascade, for example). This is Snaclec 7 from Echis pyramidum leakeyi (Leakey's carpet viper).